Reading from the N-terminus, the 189-residue chain is Elongation factor P (189 aa).

The protein belongs to the elongation factor P family.

The protein localises to the cytoplasm. It functions in the pathway protein biosynthesis; polypeptide chain elongation. Involved in peptide bond synthesis. Stimulates efficient translation and peptide-bond synthesis on native or reconstituted 70S ribosomes in vitro. Probably functions indirectly by altering the affinity of the ribosome for aminoacyl-tRNA, thus increasing their reactivity as acceptors for peptidyl transferase. This is Elongation factor P from Pseudomonas fluorescens (strain Pf0-1).